A 448-amino-acid chain; its full sequence is Protein chibby homolog 2 (448 aa).

Serine 41, serine 86, serine 89, serine 97, serine 124, serine 144, serine 148, and serine 150 each carry phosphoserine. The stretch at 163 to 198 (AKEFVLQEENKSLREENKALREENRMLRKENKILQV) forms a coiled coil. Positions 206-226 (SLGREESRPPSPLPQKDSASL) are disordered. Residues serine 212 and serine 225 each carry the phosphoserine modification. Positions 242-267 (KEDSTLQLLREENRALQQLLEQKQAY) form a coiled coil. A disordered region spans residues 270 to 321 (QTEDAAAPAEESKPAPSPHEEPCSPGLLQDQGSGLSSHFEEPRGPPAPQEDS). Residues 279–291 (EESKPAPSPHEEP) show a composition bias toward basic and acidic residues. Phosphoserine occurs at positions 335 and 338. The stretch at 356-414 (LQLLREMRQALQALLKENRLLQEENRTLQVLRAEHRGFQEENKALWENNKLKLQQKLVI) forms a coiled coil.

This sequence belongs to the chibby family. SPERT subfamily. Homodimer. Binds to NEK1.

The polypeptide is Protein chibby homolog 2 (CBY2) (Macaca fascicularis (Crab-eating macaque)).